Reading from the N-terminus, the 161-residue chain is ATP synthase subunit b 1 (161 aa).

Residues 3 to 23 (LDATFYALVGLILFFVLIAYL) form a helical membrane-spanning segment.

It belongs to the ATPase B chain family. As to quaternary structure, F-type ATPases have 2 components, F(1) - the catalytic core - and F(0) - the membrane proton channel. F(1) has five subunits: alpha(3), beta(3), gamma(1), delta(1), epsilon(1). F(0) has three main subunits: a(1), b(2) and c(10-14). The alpha and beta chains form an alternating ring which encloses part of the gamma chain. F(1) is attached to F(0) by a central stalk formed by the gamma and epsilon chains, while a peripheral stalk is formed by the delta and b chains.

It localises to the cell inner membrane. Functionally, f(1)F(0) ATP synthase produces ATP from ADP in the presence of a proton or sodium gradient. F-type ATPases consist of two structural domains, F(1) containing the extramembraneous catalytic core and F(0) containing the membrane proton channel, linked together by a central stalk and a peripheral stalk. During catalysis, ATP synthesis in the catalytic domain of F(1) is coupled via a rotary mechanism of the central stalk subunits to proton translocation. In terms of biological role, component of the F(0) channel, it forms part of the peripheral stalk, linking F(1) to F(0). In Rhizobium meliloti (strain 1021) (Ensifer meliloti), this protein is ATP synthase subunit b 1.